The chain runs to 274 residues: tRNA-cytidine(32) 2-sulfurtransferase (274 aa).

The short motif at Ser40–Ser45 is the PP-loop motif element. [4Fe-4S] cluster is bound by residues Cys115, Cys118, and Cys206.

This sequence belongs to the TtcA family. Homodimer. Requires Mg(2+) as cofactor. It depends on [4Fe-4S] cluster as a cofactor.

Its subcellular location is the cytoplasm. The enzyme catalyses cytidine(32) in tRNA + S-sulfanyl-L-cysteinyl-[cysteine desulfurase] + AH2 + ATP = 2-thiocytidine(32) in tRNA + L-cysteinyl-[cysteine desulfurase] + A + AMP + diphosphate + H(+). The protein operates within tRNA modification. Catalyzes the ATP-dependent 2-thiolation of cytidine in position 32 of tRNA, to form 2-thiocytidine (s(2)C32). The sulfur atoms are provided by the cysteine/cysteine desulfurase (IscS) system. The protein is tRNA-cytidine(32) 2-sulfurtransferase of Pseudomonas putida (strain ATCC 47054 / DSM 6125 / CFBP 8728 / NCIMB 11950 / KT2440).